A 563-amino-acid chain; its full sequence is Calnexin homolog (563 aa).

The signal sequence occupies residues 1–23 (MRFNAAITGALVSSATLMGQAHA). At 24–493 (EETEKKADAT…PINAVKQVPE (470 aa)) the chain is on the lumenal side. Aspartate 98 is a Ca(2+) binding site. Residues cysteine 141 and cysteine 175 are joined by a disulfide bond. Residues tyrosine 145, lysine 147, tyrosine 166, and aspartate 173 each coordinate an alpha-D-glucoside. Asparagine 236 carries an N-linked (GlcNAc...) asparagine glycan. Residues 241-323 (EDFAPPVNPE…EKPEDWDDEE (83 aa)) are disordered. The segment covering 249-279 (PEKEIDDPKDKKPADWVDEAKIPDPEAKKPD) has biased composition (basic and acidic residues). The segment at 253-386 (IDDPKDKKPA…RKIPNPAYFE (134 aa)) is p domain (Extended arm). The segment covering 280–305 (DWDEDAPYEIVDEEATMPEDWLEDEP) has biased composition (acidic residues). A disulfide bridge links cysteine 337 with cysteine 343. Glutamate 402 lines the an alpha-D-glucoside pocket. Residue aspartate 413 coordinates Ca(2+). A helical transmembrane segment spans residues 494-514 (VAGGLGALLLTMILVIVGAVG). Over 515 to 563 (ASSPAPAAAAKKGKEAASAAKEKASEAVSSAADTAKGAATKRNTRSSAQ) the chain is Cytoplasmic. Positions 521-563 (AAAAKKGKEAASAAKEKASEAVSSAADTAKGAATKRNTRSSAQ) are disordered. Basic and acidic residues predominate over residues 526–539 (KGKEAASAAKEKAS).

This sequence belongs to the calreticulin family.

Its subcellular location is the endoplasmic reticulum membrane. Functionally, interacts with newly synthesized monoglucosylated glycoproteins in the endoplasmic reticulum. It may act in assisting protein assembly and/or in the retention within the ER of unassembled protein subunits. It seems to play a major role in the quality control apparatus of the ER by the retention of incorrectly folded proteins. This chain is Calnexin homolog, found in Aspergillus fumigatus (strain ATCC MYA-4609 / CBS 101355 / FGSC A1100 / Af293) (Neosartorya fumigata).